The chain runs to 50 residues: Insulin 2 (50 aa).

Cystine bridges form between Cys-8–Cys-36, Cys-20–Cys-49, and Cys-35–Cys-40.

Belongs to the insulin family. Heterodimer of a B chain and an A chain linked by two disulfide bonds.

It is found in the secreted. In terms of biological role, insulin decreases blood glucose concentration. It increases cell permeability to monosaccharides, amino acids and fatty acids. It accelerates glycolysis, the pentose phosphate cycle, and glycogen synthesis in liver. The chain is Insulin 2 (ins2) from Batrachoididae sp. (Toadfish).